Here is a 321-residue protein sequence, read N- to C-terminus: Sideroflexin-3 (321 aa).

Met1 carries the N-acetylmethionine modification. The next 4 membrane-spanning stretches (helical) occupy residues 146 to 164 (LGTA…ALGL), 174 to 194 (LVGR…NIPL), 226 to 246 (FQVV…PPLI), and 266 to 286 (LQVG…CALF).

It belongs to the sideroflexin family.

It localises to the mitochondrion membrane. It carries out the reaction L-serine(in) = L-serine(out). Mitochondrial serine transporter that mediates transport of serine into mitochondria, an important step of the one-carbon metabolism pathway. Mitochondrial serine is converted to glycine and formate, which then exits to the cytosol where it is used to generate the charged folates that serve as one-carbon donors. The sequence is that of Sideroflexin-3 from Homo sapiens (Human).